The primary structure comprises 173 residues: Photosystem I assembly protein Ycf3 (173 aa).

TPR repeat units follow at residues 35-68 (AYVYYRDGLSAQNDGDYAEALENYDEALKLEDNP), 72-105 (GETLKNMAIIYMSNGEEERAIETYRRALDENSNQ), and 120-153 (GRIAEEDGRQDDADRWFDQAAEAWTQAVRLNPGG).

This sequence belongs to the Ycf3 family.

The protein localises to the cellular thylakoid membrane. Its function is as follows. Essential for the assembly of the photosystem I (PSI) complex. May act as a chaperone-like factor to guide the assembly of the PSI subunits. In Parasynechococcus marenigrum (strain WH8102), this protein is Photosystem I assembly protein Ycf3.